The chain runs to 132 residues: MVTDNIADMLTRIRNANMVKHEIVEIPGTKMSKAIAEILKEEGFIENFETYTENSNQYLLLSLKYEGQSRERIINKIERVSKPGLRVYANSKTLPLVLNGLGIAIISTSKGVMTNRKAKSLGIGGEVLCYIW.

It belongs to the universal ribosomal protein uS8 family. In terms of assembly, part of the 30S ribosomal subunit.

The protein localises to the plastid. It is found in the chloroplast. Functionally, one of the primary rRNA binding proteins, it binds directly to 16S rRNA central domain where it helps coordinate assembly of the platform of the 30S subunit. This is Small ribosomal subunit protein uS8c (rps8) from Thalassiosira pseudonana (Marine diatom).